The following is a 568-amino-acid chain: Protein yellow (568 aa).

The signal sequence occupies residues 1-28 (MHAQDKGGVLPGLSLLLIAVAMVCPSQA). N-linked (GlcNAc...) asparagine glycosylation is found at asparagine 151 and asparagine 222.

The protein belongs to the major royal jelly protein family.

The protein resides in the secreted. Its function is as follows. Controls the pigmentation pattern of the adult cuticle and larval mouth parts. In Drosophila guanche (Fruit fly), this protein is Protein yellow (y).